The following is a 117-amino-acid chain: UPF0642 protein C32H8.05 (117 aa).

The segment at aspartate 39 to lysine 117 is disordered. Residues lysine 93–lysine 106 are compositionally biased toward basic residues. The segment covering asparagine 107–lysine 117 has biased composition (low complexity).

Belongs to the UPF0642 family.

Its subcellular location is the nucleus. It is found in the nucleolus. The sequence is that of UPF0642 protein C32H8.05 from Schizosaccharomyces pombe (strain 972 / ATCC 24843) (Fission yeast).